The following is a 229-amino-acid chain: Protein 33K (229 aa).

Residues 1-157 are disordered; the sequence is MAPKKKLQLP…GALRLAPNEP (157 aa). The segment covering 14–54 has biased composition (acidic residues); it reads TDEEEYWDSQAEEVLDEEEEDMMEDWESLDEEASEVEEVSD. 3 stretches are compositionally biased toward low complexity: residues 55-64, 71-82, and 100-122; these read ETPSPSVAFP, SATGSSMATTSA, and TTGTRAAHTAPAAAAAAATAAAT. The interval 172–199 is necessary for nuclear subcellular location; the sequence is YAIFQQSRGQEQELKIKNRSLRSLTRSC. The segment at 178-198 is RS-repeat; required for splicing enhancer activity; the sequence is SRGQEQELKIKNRSLRSLTRS.

Belongs to the adenoviridae splicing factor family. As to quaternary structure, homooligomer. Interacts with DBP; this interaction occurs at a unique vertex during genome packaging. Interacts with IVa2; this interaction occurs at a unique vertex during genome packaging and seems to potentiate IVa2 and 33K oligomerization. Post-translationally, phosphorylated in vitro by human PKA and PRKDC. PRKDC inhibits, whereas PKA activates the splicing factor.

The protein localises to the host nucleus. Its function is as follows. Promotes alternative splicing of late transcripts by promoting splicing at weak 3' splice sites. Required for the temporal activation of major late pre-mRNA splicing at late times of infection. Induces the splicing and expression of the late capsid vertex protein. Probably functions as the small terminase that is part of the molecular motor that translocates genomic DNA in empty capsid during DNA packaging. This motor is located at a unique vertex and comprises at least the IVa2 ATPase, the small terminase 33K and probably a portal. Forms a ring-like structure of about 17 nm in which genomic DNA is translocated into the capsid. Stimulates IVa2 ATPase activity in the presence of the viral genome. Once the DNA is packaged, the terminase detaches: the 33K protein is present in the empty particles, but not in the mature virions. Also involved in virion assembly. This chain is Protein 33K, found in Homo sapiens (Human).